The sequence spans 867 residues: V-set and immunoglobulin domain-containing protein 10-like (867 aa).

The signal sequence occupies residues 1–27; the sequence is MDNPQALPLFLLLASLVGILTLRASSG. The Extracellular portion of the chain corresponds to 28–776; that stretch reads LQQTNFSSAF…RAGPTLSHGA (749 aa). The N-linked (GlcNAc...) asparagine glycan is linked to N32. A compositionally biased stretch (low complexity) spans 35–45; the sequence is SAFSSDSKSSS. Residues 35–60 are disordered; that stretch reads SAFSSDSKSSSQGLGVEVPSIKPPSW. Residues N88, N96, and N144 are each glycosylated (N-linked (GlcNAc...) asparagine). Residues 104–186 are disordered; that stretch reads LSPVSPFSET…PESKFSAETH (83 aa). Residues 137–153 show a composition bias toward polar residues; it reads TVKTPASNISTQVSHTK. A compositionally biased stretch (basic and acidic residues) spans 159–170; it reads PDSKFSPDDMDL. Positions 173–186 are enriched in polar residues; it reads SAQSPESKFSAETH. Ig-like C2-type domains lie at 302–394 and 402–487; these read PQLS…ADVS and PTIT…SLLN. A disulfide bond links C324 and C378. N-linked (GlcNAc...) asparagine glycosylation is present at N423. Cysteines 428 and 471 form a disulfide. An N-linked (GlcNAc...) asparagine glycan is attached at N487. A disordered region spans residues 602-627; it reads ASGCPPPSRASWAREGRPLAPGGGSR. 2 N-linked (GlcNAc...) asparagine glycosylation sites follow: N641 and N650. A helical membrane pass occupies residues 777-797; that stretch reads IAGIVLGSLLGLALLAVLLLL. Residues 798–867 are Cytoplasmic-facing; sequence CICCLCRFRG…QAQTPVQLSL (70 aa).

In terms of tissue distribution, expressed in the esophagus, particularly in the suprabasilar layers of the epithelium. Expression is largely reduced in esophageal metaplasia, dysplasia, and adenocarcinoma lesions.

The protein localises to the membrane. In Homo sapiens (Human), this protein is V-set and immunoglobulin domain-containing protein 10-like (VSIG10L).